The chain runs to 892 residues: Alanine--tRNA ligase (892 aa).

4 residues coordinate Zn(2+): histidine 574, histidine 578, cysteine 676, and histidine 680.

This sequence belongs to the class-II aminoacyl-tRNA synthetase family. The cofactor is Zn(2+).

Its subcellular location is the cytoplasm. It carries out the reaction tRNA(Ala) + L-alanine + ATP = L-alanyl-tRNA(Ala) + AMP + diphosphate. In terms of biological role, catalyzes the attachment of alanine to tRNA(Ala) in a two-step reaction: alanine is first activated by ATP to form Ala-AMP and then transferred to the acceptor end of tRNA(Ala). Also edits incorrectly charged Ser-tRNA(Ala) and Gly-tRNA(Ala) via its editing domain. The chain is Alanine--tRNA ligase from Prochlorococcus marinus (strain SARG / CCMP1375 / SS120).